The sequence spans 331 residues: 6-phosphogluconolactonase (331 aa).

The protein belongs to the cycloisomerase 2 family.

It carries out the reaction 6-phospho-D-glucono-1,5-lactone + H2O = 6-phospho-D-gluconate + H(+). It participates in carbohydrate degradation; pentose phosphate pathway; D-ribulose 5-phosphate from D-glucose 6-phosphate (oxidative stage): step 2/3. In terms of biological role, catalyzes the hydrolysis of 6-phosphogluconolactone to 6-phosphogluconate. In Salmonella typhi, this protein is 6-phosphogluconolactonase.